The sequence spans 526 residues: Nitrogenase iron-iron protein alpha chain (526 aa).

The [8Fe-7S] cluster site is built by C49, C75, and C138. [8Fe-9S-C-homocitryl] cluster is bound by residues C257 and H423. Residues 507 to 526 (RNQPMPPSRKLRDAVQPAAE) are disordered.

This sequence belongs to the NifD/NifK/NifE/NifN family. Hexamer of two alpha, two beta, and two delta chains. [8Fe-7S] cluster serves as cofactor. It depends on [8Fe-9S-C-homocitryl] cluster as a cofactor.

It catalyses the reaction N2 + 8 reduced [2Fe-2S]-[ferredoxin] + 16 ATP + 16 H2O = H2 + 8 oxidized [2Fe-2S]-[ferredoxin] + 2 NH4(+) + 16 ADP + 16 phosphate + 6 H(+). Its function is as follows. This iron-iron protein is part of the nitrogenase complex that catalyzes the key enzymatic reactions in nitrogen fixation. Other nitrogenase complexes utilize a molybdenum-iron protein or a vanadium-iron protein. The chain is Nitrogenase iron-iron protein alpha chain (anfD) from Rhodobacter capsulatus (Rhodopseudomonas capsulata).